We begin with the raw amino-acid sequence, 340 residues long: uncharacterized protein (340 aa).

This is an uncharacterized protein from Enterobacteria phage T4 (Bacteriophage T4).